The chain runs to 302 residues: 33 kDa chaperonin (302 aa).

Disulfide bonds link C234-C236 and C267-C270.

It belongs to the HSP33 family. Post-translationally, under oxidizing conditions two disulfide bonds are formed involving the reactive cysteines. Under reducing conditions zinc is bound to the reactive cysteines and the protein is inactive.

Its subcellular location is the cytoplasm. Redox regulated molecular chaperone. Protects both thermally unfolding and oxidatively damaged proteins from irreversible aggregation. Plays an important role in the bacterial defense system toward oxidative stress. This chain is 33 kDa chaperonin, found in Neisseria meningitidis serogroup B (strain ATCC BAA-335 / MC58).